The primary structure comprises 320 residues: AA9 family lytic polysaccharide monooxygenase-like protein CEL1 (320 aa).

The N-terminal stretch at 1 to 29 is a signal peptide; that stretch reads MRLPSRQQVLKMLATFSLALGLFAAKVQA. Disulfide bonds link cysteine 78-cysteine 199 and cysteine 121-cysteine 126. Histidine 109 is a binding site for Cu(2+). The N-linked (GlcNAc...) asparagine glycan is linked to asparagine 163. O2 is bound by residues histidine 189 and glutamine 194. Tyrosine 196 provides a ligand contact to Cu(2+). The segment at 255–284 is disordered; sequence GSGGNGGSPTTTPHTTTPITTSPPPTSTPG. A compositionally biased stretch (low complexity) spans 262-274; it reads SPTTTPHTTTPIT. The CBM1 domain occupies 284-320; that stretch reads GTIPQYGQCGGIGWTGGTGCVAPYQCKVINDYYSQCL.

This sequence belongs to the polysaccharide monooxygenase AA9 family. It depends on Cu(2+) as a cofactor.

The protein localises to the secreted. It catalyses the reaction [(1-&gt;4)-beta-D-glucosyl]n+m + reduced acceptor + O2 = 4-dehydro-beta-D-glucosyl-[(1-&gt;4)-beta-D-glucosyl]n-1 + [(1-&gt;4)-beta-D-glucosyl]m + acceptor + H2O.. In terms of biological role, lytic polysaccharide monooxygenase (LPMO)-like protein that binds strongly to cellulose. Seems not to acts as an endoglucanase, a ceUobiohydrolase able to hydrolyze fluorogenic cellobiosides, a /3-glucosidase, a xylanase, nor a cellobiose:quinone oxidoreductase. This chain is AA9 family lytic polysaccharide monooxygenase-like protein CEL1, found in Agaricus bisporus (White button mushroom).